Here is a 374-residue protein sequence, read N- to C-terminus: Homoserine O-succinyltransferase (374 aa).

The region spanning 47–357 (NAILVCHALS…NFGHDSFLME (311 aa)) is the AB hydrolase-1 domain. The active-site Nucleophile is serine 153. Position 223 (arginine 223) interacts with substrate. Residues aspartate 318 and histidine 351 contribute to the active site. Residue aspartate 352 participates in substrate binding.

This sequence belongs to the AB hydrolase superfamily. MetX family. Homodimer.

The protein resides in the cytoplasm. The catalysed reaction is L-homoserine + succinyl-CoA = O-succinyl-L-homoserine + CoA. The protein operates within amino-acid biosynthesis; L-methionine biosynthesis via de novo pathway; O-succinyl-L-homoserine from L-homoserine: step 1/1. Its function is as follows. Transfers a succinyl group from succinyl-CoA to L-homoserine, forming succinyl-L-homoserine. This chain is Homoserine O-succinyltransferase, found in Dechloromonas aromatica (strain RCB).